Here is a 69-residue protein sequence, read N- to C-terminus: UPF0337 protein YjbJ (69 aa).

The protein belongs to the UPF0337 (CsbD) family.

The polypeptide is UPF0337 protein YjbJ (yjbJ) (Escherichia coli O157:H7).